A 373-amino-acid polypeptide reads, in one-letter code: Mannitol-1-phosphate 5-dehydrogenase (373 aa).

Residue 3 to 14 (ALHFGAGNIGRG) coordinates NAD(+).

The protein belongs to the mannitol dehydrogenase family.

It carries out the reaction D-mannitol 1-phosphate + NAD(+) = beta-D-fructose 6-phosphate + NADH + H(+). The chain is Mannitol-1-phosphate 5-dehydrogenase from Bacillus velezensis (strain DSM 23117 / BGSC 10A6 / LMG 26770 / FZB42) (Bacillus amyloliquefaciens subsp. plantarum).